Consider the following 265-residue polypeptide: Thymidine kinase 2, mitochondrial (265 aa).

The N-terminal 33 residues, 1 to 33 (MLLRPLRGWAALALRCFEPGSPGSPASGPGSRR), are a transit peptide targeting the mitochondrion. The segment covering 21–31 (SPGSPASGPGS) has biased composition (low complexity). Residues 21–45 (SPGSPASGPGSRRVQRGAWPSDKER) form a disordered region. 57–65 (GNIASGKTT) contributes to the ATP binding site. E133 acts as the Proton acceptor in catalysis.

It belongs to the DCK/DGK family. As to quaternary structure, homodimer.

It is found in the mitochondrion. It carries out the reaction thymidine + ATP = dTMP + ADP + H(+). It catalyses the reaction 2'-deoxycytidine + ATP = dCMP + ADP + H(+). The catalysed reaction is 2'-deoxyuridine + ATP = dUMP + ADP + H(+). In terms of biological role, phosphorylates thymidine, deoxycytidine, and deoxyuridine in the mitochondrial matrix. In non-replicating cells, where cytosolic dNTP synthesis is down-regulated, mtDNA synthesis depends solely on TK2 and DGUOK. The chain is Thymidine kinase 2, mitochondrial (TK2) from Macaca fascicularis (Crab-eating macaque).